The sequence spans 298 residues: MQLEKMITEGSNTASAEIDRVSTLEMCRIINDEDKTVPLAVDRVLPDIAAAIDVIHAQVSGGGRLIYLGAGTSGRLGILDASECPPTYGVKPGLVVGLIAGGEYAIQHAVEGAEDSREGGVNDLKNINLTAQDVVVGIAASGRTPYVIAGLEYARQLGCRTVGISCNPGSAVSTTAEFAITPIVGAEVVTGSSRMKAGTAQKLVLNMLSTGLMIKSGKVFGNLMVDVVATNEKLHVRQVNIVKNATGCNAEQAEAALIACERNCKTAIVMVLKNLDAAEAKKRLDQHGGFIRQVLDKE.

An SIS domain is found at 55–218 (IHAQVSGGGR…STGLMIKSGK (164 aa)). The Proton donor role is filled by E83. E114 is an active-site residue.

The protein belongs to the GCKR-like family. MurNAc-6-P etherase subfamily. In terms of assembly, homodimer.

The catalysed reaction is N-acetyl-D-muramate 6-phosphate + H2O = N-acetyl-D-glucosamine 6-phosphate + (R)-lactate. It participates in amino-sugar metabolism; 1,6-anhydro-N-acetylmuramate degradation. It functions in the pathway amino-sugar metabolism; N-acetylmuramate degradation. The protein operates within cell wall biogenesis; peptidoglycan recycling. Specifically catalyzes the cleavage of the D-lactyl ether substituent of MurNAc 6-phosphate, producing GlcNAc 6-phosphate and D-lactate. Together with AnmK, is also required for the utilization of anhydro-N-acetylmuramic acid (anhMurNAc) either imported from the medium or derived from its own cell wall murein, and thus plays a role in cell wall recycling. This is N-acetylmuramic acid 6-phosphate etherase from Shigella flexneri serotype 5b (strain 8401).